The following is a 354-amino-acid chain: Tryptophan--tRNA ligase (354 aa).

ATP contacts are provided by residues 13-15 (QPT) and 21-22 (GN). The short motif at 14 to 22 (PTGNLHLGN) is the 'HIGH' region element. Asp137 lines the L-tryptophan pocket. ATP is bound by residues 149-151 (GDD), Val208, and 217-221 (KMSKS). Positions 217–221 (KMSKS) match the 'KMSKS' region motif.

This sequence belongs to the class-I aminoacyl-tRNA synthetase family. As to quaternary structure, homodimer.

The protein localises to the cytoplasm. It catalyses the reaction tRNA(Trp) + L-tryptophan + ATP = L-tryptophyl-tRNA(Trp) + AMP + diphosphate + H(+). Catalyzes the attachment of tryptophan to tRNA(Trp). In Agrobacterium fabrum (strain C58 / ATCC 33970) (Agrobacterium tumefaciens (strain C58)), this protein is Tryptophan--tRNA ligase.